The chain runs to 77 residues: Immune protein Tis1 (77 aa).

Its function is as follows. Immunity protein that plays a role in preventing early activation of toxin Tas1. This is Immune protein Tis1 (tis1) from Pseudomonas aeruginosa (strain UCBPP-PA14).